The primary structure comprises 410 residues: Cysteine desulfurase IscS (410 aa).

Pyridoxal 5'-phosphate-binding positions include 80–81 (AT), Asn-160, Gln-188, and 208–210 (SGH). Lys-211 is subject to N6-(pyridoxal phosphate)lysine. Thr-248 contacts pyridoxal 5'-phosphate. Cys-334 serves as the catalytic Cysteine persulfide intermediate. Cys-334 contributes to the [2Fe-2S] cluster binding site.

Belongs to the class-V pyridoxal-phosphate-dependent aminotransferase family. NifS/IscS subfamily. Homodimer. Forms a heterotetramer with IscU, interacts with other sulfur acceptors. Requires pyridoxal 5'-phosphate as cofactor.

It is found in the cytoplasm. It catalyses the reaction (sulfur carrier)-H + L-cysteine = (sulfur carrier)-SH + L-alanine. Its pathway is cofactor biosynthesis; iron-sulfur cluster biosynthesis. Functionally, master enzyme that delivers sulfur to a number of partners involved in Fe-S cluster assembly, tRNA modification or cofactor biosynthesis. Catalyzes the removal of elemental sulfur atoms from cysteine to produce alanine. Functions as a sulfur delivery protein for Fe-S cluster synthesis onto IscU, an Fe-S scaffold assembly protein, as well as other S acceptor proteins. The protein is Cysteine desulfurase IscS of Rickettsia massiliae (strain Mtu5).